Reading from the N-terminus, the 529-residue chain is Bifunctional purine biosynthesis protein PurH (529 aa).

In terms of domain architecture, MGS-like spans 1–148; the sequence is MQQRRSVRRA…KNHKDVAIVV (148 aa).

Belongs to the PurH family.

The catalysed reaction is (6R)-10-formyltetrahydrofolate + 5-amino-1-(5-phospho-beta-D-ribosyl)imidazole-4-carboxamide = 5-formamido-1-(5-phospho-D-ribosyl)imidazole-4-carboxamide + (6S)-5,6,7,8-tetrahydrofolate. The enzyme catalyses IMP + H2O = 5-formamido-1-(5-phospho-D-ribosyl)imidazole-4-carboxamide. Its pathway is purine metabolism; IMP biosynthesis via de novo pathway; 5-formamido-1-(5-phospho-D-ribosyl)imidazole-4-carboxamide from 5-amino-1-(5-phospho-D-ribosyl)imidazole-4-carboxamide (10-formyl THF route): step 1/1. It functions in the pathway purine metabolism; IMP biosynthesis via de novo pathway; IMP from 5-formamido-1-(5-phospho-D-ribosyl)imidazole-4-carboxamide: step 1/1. The protein is Bifunctional purine biosynthesis protein PurH of Salmonella arizonae (strain ATCC BAA-731 / CDC346-86 / RSK2980).